A 292-amino-acid chain; its full sequence is 4-diphosphocytidyl-2-C-methyl-D-erythritol kinase (292 aa).

Residue K20 is part of the active site. 103–113 (PMGGGIGGGSS) contacts ATP. Residue D145 is part of the active site.

Belongs to the GHMP kinase family. IspE subfamily.

It carries out the reaction 4-CDP-2-C-methyl-D-erythritol + ATP = 4-CDP-2-C-methyl-D-erythritol 2-phosphate + ADP + H(+). Its pathway is isoprenoid biosynthesis; isopentenyl diphosphate biosynthesis via DXP pathway; isopentenyl diphosphate from 1-deoxy-D-xylulose 5-phosphate: step 3/6. In terms of biological role, catalyzes the phosphorylation of the position 2 hydroxy group of 4-diphosphocytidyl-2C-methyl-D-erythritol. This is 4-diphosphocytidyl-2-C-methyl-D-erythritol kinase from Cupriavidus metallidurans (strain ATCC 43123 / DSM 2839 / NBRC 102507 / CH34) (Ralstonia metallidurans).